Consider the following 407-residue polypeptide: 3-oxoacyl-[acyl-carrier-protein] synthase 1 (407 aa).

Residues 1–406 form the Ketosynthase family 3 (KS3) domain; that stretch reads MKRVVITGFG…GTNVSLILKK (406 aa). Residues C164, H300, and H336 each act as for beta-ketoacyl synthase activity in the active site.

This sequence belongs to the thiolase-like superfamily. Beta-ketoacyl-ACP synthases family. Homodimer.

Its subcellular location is the cytoplasm. It carries out the reaction a fatty acyl-[ACP] + malonyl-[ACP] + H(+) = a 3-oxoacyl-[ACP] + holo-[ACP] + CO2. It catalyses the reaction (3Z)-decenoyl-[ACP] + malonyl-[ACP] + H(+) = 3-oxo-(5Z)-dodecenoyl-[ACP] + holo-[ACP] + CO2. The protein operates within lipid metabolism; fatty acid biosynthesis. In terms of biological role, involved in the type II fatty acid elongation cycle. Catalyzes the elongation of a wide range of acyl-ACP by the addition of two carbons from malonyl-ACP to an acyl acceptor. Can also use unsaturated fatty acids. Catalyzes a key reaction in unsaturated fatty acid (UFA) synthesis, the elongation of the cis-3-decenoyl-ACP produced by FabA. The protein is 3-oxoacyl-[acyl-carrier-protein] synthase 1 (fabB) of Buchnera aphidicola subsp. Schizaphis graminum (strain Sg).